The chain runs to 165 residues: Small ribosomal subunit protein uS5 (165 aa).

One can recognise an S5 DRBM domain in the interval 13 to 76 (LEEKVLVVNR…EAARKNLITI (64 aa)).

This sequence belongs to the universal ribosomal protein uS5 family. As to quaternary structure, part of the 30S ribosomal subunit. Contacts proteins S4 and S8.

Functionally, with S4 and S12 plays an important role in translational accuracy. Located at the back of the 30S subunit body where it stabilizes the conformation of the head with respect to the body. This chain is Small ribosomal subunit protein uS5, found in Chlamydia caviae (strain ATCC VR-813 / DSM 19441 / 03DC25 / GPIC) (Chlamydophila caviae).